The following is a 231-amino-acid chain: Putative cobalt transport protein CbiM 2 (231 aa).

Transmembrane regions (helical) follow at residues 8–28 (LPIGWCIFWAVLSAPFVIYGI), 41–61 (VLPLMAVCGAFVFVLSALKIP), 75–95 (LSAAFFGPFITSVLGTIVLLF), 108–128 (LGANVFSMAIAGPFIAWLVFV), 136–156 (VGIGVAVFITAAVANLVTYTV), and 176–196 (IAFAGIFAVTQIPLAIIEGII).

Belongs to the CbiM family. As to quaternary structure, forms an energy-coupling factor (ECF) transporter complex composed of an ATP-binding protein (A component, CbiO), a transmembrane protein (T component, CbiQ) and 2 possible substrate-capture proteins (S components, CbiM and CbiN) of unknown stoichimetry.

It is found in the cell membrane. It participates in cofactor biosynthesis; adenosylcobalamin biosynthesis. Part of the energy-coupling factor (ECF) transporter complex CbiMNOQ involved in cobalt import. This chain is Putative cobalt transport protein CbiM 2, found in Methanocorpusculum labreanum (strain ATCC 43576 / DSM 4855 / Z).